The chain runs to 112 residues: Seminal vesicle secretory protein 4 (112 aa).

The N-terminal stretch at 1-21 is a signal peptide; the sequence is MKSTSLFLCSLLLLLVTGAIG. The tract at residues 26–112 is disordered; it reads EKYSQSEEVV…RSRFAQDVLN (87 aa). Composition is skewed to low complexity over residues 36 to 47 and 85 to 97; these read SESFASGPSSGS and RSSG…GESS.

This sequence belongs to the SVP2/SVP5/SVP6 family. As to expression, testis.

It localises to the secreted. Its subcellular location is the extracellular space. In Rattus norvegicus (Rat), this protein is Seminal vesicle secretory protein 4 (Svs4).